The primary structure comprises 294 residues: MKNNKVLVVVGPTAVGKTALGIDLAIKMNGEIISGDSQQVYQGLDIGTAKVTKAEQALAVHHLIDVRKWTENFSVHDFVMEANRLIEEIIERGNVPIIVGGTGLYIQSLIEGYHLGGQENHQAMMELRETLLALTDEELFEKVLKLNPNFPELNRRRAIRFLELQTFGSTDENSGSDYNFLLIGLNAERKVLYERINQRVEQMMSEGLLSEARSLFEKAPDAQAAKGIGYKEFFPYFSGEISLEDAVELVKRNSRRYAKRQLTWFRNRMEVEFEDVFSETYPDSVFEKVTQFLN.

11 to 18 (GPTAVGKT) serves as a coordination point for ATP. A substrate-binding site is contributed by 13-18 (TAVGKT). Residues 36–39 (DSQQ) are interaction with substrate tRNA.

It belongs to the IPP transferase family. In terms of assembly, monomer. Requires Mg(2+) as cofactor.

The enzyme catalyses adenosine(37) in tRNA + dimethylallyl diphosphate = N(6)-dimethylallyladenosine(37) in tRNA + diphosphate. Functionally, catalyzes the transfer of a dimethylallyl group onto the adenine at position 37 in tRNAs that read codons beginning with uridine, leading to the formation of N6-(dimethylallyl)adenosine (i(6)A). The sequence is that of tRNA dimethylallyltransferase from Lactococcus lactis subsp. cremoris (strain MG1363).